We begin with the raw amino-acid sequence, 236 residues long: ADTIVAVELDTYPNTDVGDPSYPHXXXXXXSVRXXTAKWNMQNGKVGTAHISYNSVGKRLSAVVSYPNGDSATVSYDVDLDNVLPEWVRVGLSASTGLYKETNTILSWSFTSKLKSNSTHETNALHFMFNQFTKDQKDLILQSDATTGTDGNLXXTRVSSNGPSQGSTVGRALFYAPVHIWESSATVAGFDATFXXLIKSPDSHPADGIAFFISNIDSSIPSGSTGRLLGLFPDAN.

Residues E8 and D10 each coordinate Mn(2+). Positions 10, 12, 14, and 19 each coordinate Ca(2+). Y12 lines the a carbohydrate pocket. Residues D19 and H24 each contribute to the Mn(2+) site. A carbohydrate is bound at residue 98–99 (LY). D207 provides a ligand contact to Ca(2+). R227 contributes to the a carbohydrate binding site.

It belongs to the leguminous lectin family. As to quaternary structure, homotetramer.

Its function is as follows. Glucose/D-mannose specific lectin. This chain is Concanavalin-Ma, found in Canavalia rosea (Beach bean).